We begin with the raw amino-acid sequence, 377 residues long: Peroxisomal membrane protein PEX14 (377 aa).

Positions 1–20 (MASSEQAEQPSQPSSSPGSE) are enriched in low complexity. Positions 1-23 (MASSEQAEQPSQPSSSPGSENVV) are disordered. The residue at position 2 (A2) is an N-acetylalanine. At 2–108 (ASSEQAEQPS…CSPGSSRWRD (107 aa)) the chain is on the peroxisomal side. K34 carries the post-translational modification N6-acetyllysine. Residues 109–126 (YGALAIIMAGIAFGFHQL) form a helical membrane-spanning segment. The Cytoplasmic portion of the chain corresponds to 127 to 377 (YKKYLLPLIL…EGASNESERH (251 aa)). The tract at residues 230 to 377 (PPSPSAPKIP…EGASNESERH (148 aa)) is disordered. A Phosphoserine modification is found at S232. Low complexity-rich tracts occupy residues 244–259 (PVKSPSPSSPAAVNHH) and 265–275 (SPVSNESTSSS). 2 positions are modified to phosphoserine: S282 and S335. Residues 323-342 (KEEEEEEEEEDVSHVDEEDV) are compositionally biased toward acidic residues. Positions 360-377 (QVDKLRRPEGASNESERH) are enriched in basic and acidic residues.

This sequence belongs to the peroxin-14 family. Interacts with PEX13; forming the PEX13-PEX14 docking complex. Interacts with PEX5 (via WxxxF/Y motifs). Interacts with PEX19. Interacts with tubulin.

It is found in the peroxisome membrane. Functionally, component of the PEX13-PEX14 docking complex, a translocon channel that specifically mediates the import of peroxisomal cargo proteins bound to PEX5 receptor. The PEX13-PEX14 docking complex forms a large import pore which can be opened to a diameter of about 9 nm. Mechanistically, PEX5 receptor along with cargo proteins associates with the PEX14 subunit of the PEX13-PEX14 docking complex in the cytosol, leading to the insertion of the receptor into the organelle membrane with the concomitant translocation of the cargo into the peroxisome matrix. Plays a key role for peroxisome movement through a direct interaction with tubulin. This Cricetulus longicaudatus (Long-tailed dwarf hamster) protein is Peroxisomal membrane protein PEX14.